A 67-amino-acid polypeptide reads, in one-letter code: Alpha-actitoxin-Ms11a-3 (67 aa).

Positions 1-24 are cleaved as a signal peptide; it reads MASKIFFVLAVFLVMSAVLPESFA. 3 disulfides stabilise this stretch: Cys-26–Cys-41, Cys-33–Cys-46, and Cys-40–Cys-61. Lys-66 carries the post-translational modification Lysine amide.

The protein localises to the secreted. Its subcellular location is the nematocyst. Functionally, alpha-toxins act on postsynaptic membranes, they bind to the nicotinic acetylcholine receptors (nAChR) and thus inhibit them. This toxin shows inhibition against mouse alpha-1-beta-1-delta-epsilon (CHRNA1-CHRNB1-CHRND-CHRNE) (IC(50)=1215 nM), rat alpha-3-beta-4/CHRNA3-CHRNB4 (IC(50)=5.173 uM), rat alpha-7/CHRNA7 (IC(50)=4.786 uM), human alpha-7/CHRNA7 (IC(50)=8.869 uM), and rat alpha-9-alpha-10/CHRNA9-CHRNA10 (IC(50)=202 nM). Also competes with alpha-bungarotoxin for binding to orthosteric sites on muscle-type T.carlifornicus (IC(50)=256 nM) and human alpha-7/CHRNA7 nAChRs (IC(50)=19.81 uM). This is Alpha-actitoxin-Ms11a-3 from Metridium senile (Brown sea anemone).